A 206-amino-acid polypeptide reads, in one-letter code: Probable chemoreceptor glutamine deamidase CheD (206 aa).

Belongs to the CheD family.

It catalyses the reaction L-glutaminyl-[protein] + H2O = L-glutamyl-[protein] + NH4(+). Functionally, probably deamidates glutamine residues to glutamate on methyl-accepting chemotaxis receptors (MCPs), playing an important role in chemotaxis. This is Probable chemoreceptor glutamine deamidase CheD from Laribacter hongkongensis (strain HLHK9).